Here is a 468-residue protein sequence, read N- to C-terminus: Sulfate adenylyltransferase subunit 1 (468 aa).

In terms of domain architecture, tr-type G spans 22 to 239; the sequence is KELLRFLTCG…TVEIASDKNA (218 aa). The interval 31 to 38 is G1; that stretch reads GSVDDGKS. 31 to 38 contributes to the GTP binding site; the sequence is GSVDDGKS. The segment at 89 to 93 is G2; sequence GITID. Residues 110–113 form a G3 region; that stretch reads DTPG. GTP contacts are provided by residues 110 to 114 and 165 to 168; these read DTPGH and NKMD. The tract at residues 165–168 is G4; it reads NKMD. Residues 202–204 form a G5 region; that stretch reads SAL.

This sequence belongs to the TRAFAC class translation factor GTPase superfamily. Classic translation factor GTPase family. CysN/NodQ subfamily. As to quaternary structure, heterodimer composed of CysD, the smaller subunit, and CysN.

The catalysed reaction is sulfate + ATP + H(+) = adenosine 5'-phosphosulfate + diphosphate. Its pathway is sulfur metabolism; hydrogen sulfide biosynthesis; sulfite from sulfate: step 1/3. With CysD forms the ATP sulfurylase (ATPS) that catalyzes the adenylation of sulfate producing adenosine 5'-phosphosulfate (APS) and diphosphate, the first enzymatic step in sulfur assimilation pathway. APS synthesis involves the formation of a high-energy phosphoric-sulfuric acid anhydride bond driven by GTP hydrolysis by CysN coupled to ATP hydrolysis by CysD. This is Sulfate adenylyltransferase subunit 1 from Teredinibacter turnerae (strain ATCC 39867 / T7901).